The chain runs to 508 residues: DEAD-box ATP-dependent RNA helicase 8 (508 aa).

The tract at residues 1 to 123 (MDPRARYPPG…LKLPPQDTRY (123 aa)) is disordered. A compositionally biased stretch (low complexity) spans 18–53 (NPNYYNRGPPLQQQHNHHQQQQTSAPHHQQYVQRQP). A compositionally biased stretch (basic residues) spans 54–64 (QQHHHHNHHQQ). Positions 134–162 (NEFEDYFLKRELLMGIYEKGFERPSPIQE) match the Q motif motif. One can recognise a Helicase ATP-binding domain in the interval 165 to 335 (IPIALTGSDI…DKYLPKPYVI (171 aa)). 178-185 (AKNGTGKT) is a binding site for ATP. The DEAD box signature appears at 283 to 286 (DEAD). In terms of domain architecture, Helicase C-terminal spans 345 to 505 (GITQFYAFVE…PIPPQIDQAI (161 aa)).

This sequence belongs to the DEAD box helicase family. DDX6/DHH1 subfamily.

It localises to the cytoplasm. The protein resides in the P-body. It catalyses the reaction ATP + H2O = ADP + phosphate + H(+). In terms of biological role, ATP-dependent RNA helicase involved in mRNA turnover, and more specifically in mRNA decapping. This is DEAD-box ATP-dependent RNA helicase 8 from Oryza sativa subsp. japonica (Rice).